A 312-amino-acid chain; its full sequence is Pantothenate kinase (312 aa).

G97–S104 is a binding site for ATP.

It belongs to the prokaryotic pantothenate kinase family.

It localises to the cytoplasm. The enzyme catalyses (R)-pantothenate + ATP = (R)-4'-phosphopantothenate + ADP + H(+). Its pathway is cofactor biosynthesis; coenzyme A biosynthesis; CoA from (R)-pantothenate: step 1/5. The chain is Pantothenate kinase from Mycolicibacterium vanbaalenii (strain DSM 7251 / JCM 13017 / BCRC 16820 / KCTC 9966 / NRRL B-24157 / PYR-1) (Mycobacterium vanbaalenii).